A 111-amino-acid chain; its full sequence is Colipase (111 aa).

A signal peptide spans Met-1–Ala-16. Positions Ala-17–Arg-21 are cleaved as a propeptide — enterostatin, activation peptide. Disulfide bonds link Cys-33–Cys-44, Cys-39–Cys-55, Cys-43–Cys-77, Cys-65–Cys-85, and Cys-79–Cys-103.

This sequence belongs to the colipase family. As to quaternary structure, forms a 1:1 stoichiometric complex with pancreatic lipase. Expressed by the pancreas.

The protein resides in the secreted. Functionally, colipase is a cofactor of pancreatic lipase. It allows the lipase to anchor itself to the lipid-water interface. Without colipase the enzyme is washed off by bile salts, which have an inhibitory effect on the lipase. Enterostatin has a biological activity as a satiety signal. This is Colipase (CLPS) from Ictidomys tridecemlineatus (Thirteen-lined ground squirrel).